The primary structure comprises 1082 residues: Inner tegument protein (1082 aa).

The interval 604–1082 (DHIECLFNVS…QQDLITPLKF (479 aa)) is interaction with large tegument protein.

This sequence belongs to the herpesviridae inner tegument protein family. Interacts (via C-terminus) with the large tegument protein/LTP (via N-terminus).

The protein resides in the virion tegument. It is found in the host cytoplasm. It localises to the host nucleus. Its subcellular location is the host Golgi apparatus. The protein localises to the host trans-Golgi network. Its function is as follows. Plays an essential role in cytoplasmic secondary envelopment during viral egress. Interacts with the capsid via the large tegument protein/LTP and participates in its transport to the host trans-Golgi network (TGN) where secondary envelopment occurs. Modulates tegumentation and capsid accumulation at the viral assembly complex. The chain is Inner tegument protein (U30) from Homo sapiens (Human).